The primary structure comprises 236 residues: Class B acid phosphatase (236 aa).

The N-terminal stretch at 1 to 22 (MKNVMKLSVIALLTAAAVPAMA) is a signal peptide. Catalysis depends on Asp67, which acts as the Nucleophile. The Mg(2+) site is built by Asp67 and Asp69. Asp69 serves as the catalytic Proton donor. Substrate is bound by residues 136–137 (TG) and Lys176. Residue Asp191 participates in Mg(2+) binding.

The protein belongs to the class B bacterial acid phosphatase family. Homotetramer. Requires Mg(2+) as cofactor.

It is found in the periplasm. The enzyme catalyses a phosphate monoester + H2O = an alcohol + phosphate. Its function is as follows. Dephosphorylates several organic phosphate monoesters. Also has a phosphotransferase activity catalyzing the transfer of low-energy phosphate groups from organic phosphate monoesters to free hydroxyl groups of various organic compounds. The protein is Class B acid phosphatase (aphA) of Haemophilus influenzae (strain ATCC 51907 / DSM 11121 / KW20 / Rd).